The sequence spans 151 residues: Nucleoside diphosphate kinase (151 aa).

ATP-binding residues include K10, F58, R86, T92, R103, and N113. The Pros-phosphohistidine intermediate role is filled by H116.

Belongs to the NDK family. In terms of assembly, homotetramer. Mg(2+) serves as cofactor.

It is found in the cytoplasm. The catalysed reaction is dZDP + ATP = dZTP + ADP. The enzyme catalyses a 2'-deoxyribonucleoside 5'-diphosphate + ATP = a 2'-deoxyribonucleoside 5'-triphosphate + ADP. It carries out the reaction a ribonucleoside 5'-diphosphate + ATP = a ribonucleoside 5'-triphosphate + ADP. It participates in purine metabolism. Functionally, major role in the synthesis of nucleoside triphosphates other than ATP. The ATP gamma phosphate is transferred to the NDP beta phosphate via a ping-pong mechanism, using a phosphorylated active-site intermediate. In terms of biological role, (Microbial infection) Catalyzes the phosphorylation of dZDP to dZTP, when the bacterium is infected by a phage that produces the substrate for the synthesis of dZTP (2- amino-2'-deoxyadenosine 5'-triphosphate), which is then used by the phage as a DNA polymerase substrate. The polypeptide is Nucleoside diphosphate kinase (Synechococcus sp. (strain CC9605)).